The sequence spans 341 residues: Thromboxane A2 receptor (341 aa).

At 1–29 (MWPNGTSLGACFRPVNITLQERRAIASPW) the chain is on the extracellular side. Residues Asn-4 and Asn-16 are each glycosylated (N-linked (GlcNAc...) asparagine). The helical transmembrane segment at 30–52 (FAASFCALGLGSNLLALSVLAGA) threads the bilayer. Residues 53–65 (RPGAGPRSSFLAL) lie on the Cytoplasmic side of the membrane. The chain crosses the membrane as a helical span at residues 66-86 (LCGLVLTDFLGLLVTGAIVAS). The Extracellular portion of the chain corresponds to 87 to 105 (QHAALLDWRATDPSCRLCY). A disulfide bridge connects residues Cys-104 and Cys-181. The helical transmembrane segment at 106–127 (FMGVAMVFFGLCPLLLGAAMAS) threads the bilayer. Topologically, residues 128–147 (ERFVGITRPFSRPTATSRRA) are cytoplasmic. The chain crosses the membrane as a helical span at residues 148–170 (WATVGLVWVAAGALGLLPLLGLG). The Extracellular segment spans residues 171–191 (RYSVQYPGSWCFLTLGTQRGD). Residues 192–217 (VVFGLIFALLGSASVGLSLLLNTVSV) traverse the membrane as a helical segment. Residues 218 to 244 (ATLCRVYHTREATQRPRDCEVEMMVQL) lie on the Cytoplasmic side of the membrane. Residues 245 to 268 (VGIMVVATVCWMPLLVFIMQTLLQ) traverse the membrane as a helical segment. Residues 269-287 (TPPVMSFSGQLLRATEHQL) are Extracellular-facing. A helical membrane pass occupies residues 288–309 (LIYLRVATWNQILDPWVYILFR). Residues 310 to 341 (RSVLRRLHPRFSSQLQAVSLRRPPAQAMLSGP) are Cytoplasmic-facing. A Phosphoserine modification is found at Ser-328.

Belongs to the G-protein coupled receptor 1 family. In terms of assembly, interacts with RPGRIP1L. Interacts with RACK1; the interaction regulates TBXA2R cell surface expression.

The protein resides in the cell membrane. Functionally, receptor for thromboxane A2 (TXA2), a potent stimulator of platelet aggregation. The activity of this receptor is mediated by a G-protein that activates a phosphatidylinositol-calcium second messenger system. In the kidney, the binding of TXA2 to glomerular TP receptors causes intense vasoconstriction. Activates phospholipase C and adenylyl cyclase. In Mus musculus (Mouse), this protein is Thromboxane A2 receptor (Tbxa2r).